The sequence spans 367 residues: Peptide chain release factor 2 (367 aa).

N5-methylglutamine is present on Q249.

This sequence belongs to the prokaryotic/mitochondrial release factor family. In terms of processing, methylated by PrmC. Methylation increases the termination efficiency of RF2.

The protein resides in the cytoplasm. Functionally, peptide chain release factor 2 directs the termination of translation in response to the peptide chain termination codons UGA and UAA. This chain is Peptide chain release factor 2, found in Thermotoga sp. (strain RQ2).